We begin with the raw amino-acid sequence, 220 residues long: MEADPCRREREEMVEFQIRARGIGDERVLAAMRKIPRHLFVPKNLERVAYEDRPLPIGEGQTISQPYIVAVMTEHLEIRSHDRVLEIGTGSGYQAALLAELAAKVVSVERLPDIADRARENLARAGVTGIEVVVGDGTQGYPPEAPYDAIVVTAASPEIPQPLIDQLGKGGRLVAPVGPRECQDLVKLVKREGRVETIPLGGVCFVPLIGQFGWQGEVSP.

Residue Ser64 is part of the active site.

The protein belongs to the methyltransferase superfamily. L-isoaspartyl/D-aspartyl protein methyltransferase family.

Its subcellular location is the cytoplasm. It catalyses the reaction [protein]-L-isoaspartate + S-adenosyl-L-methionine = [protein]-L-isoaspartate alpha-methyl ester + S-adenosyl-L-homocysteine. Functionally, catalyzes the methyl esterification of L-isoaspartyl residues in peptides and proteins that result from spontaneous decomposition of normal L-aspartyl and L-asparaginyl residues. It plays a role in the repair and/or degradation of damaged proteins. This chain is Protein-L-isoaspartate O-methyltransferase, found in Methanoculleus marisnigri (strain ATCC 35101 / DSM 1498 / JR1).